Consider the following 247-residue polypeptide: GTP cyclohydrolase 1 type 2 homolog (247 aa).

The a divalent metal cation site is built by histidine 63, histidine 64, aspartate 101, histidine 215, and glutamate 219.

The protein belongs to the GTP cyclohydrolase I type 2/NIF3 family. As to quaternary structure, toroid-shaped homohexamer. In the hexamer, 3 dimers assemble to form a ring-like structure surrounding a central hole.

In terms of biological role, provides significant protection from radiation damage and may be involved in the degradation of radiation-damaged nucleotides. The chain is GTP cyclohydrolase 1 type 2 homolog (ybgI) from Escherichia coli O157:H7.